Reading from the N-terminus, the 419-residue chain is Histidine--tRNA ligase (419 aa).

This sequence belongs to the class-II aminoacyl-tRNA synthetase family. As to quaternary structure, homodimer.

The protein localises to the cytoplasm. The catalysed reaction is tRNA(His) + L-histidine + ATP = L-histidyl-tRNA(His) + AMP + diphosphate + H(+). The protein is Histidine--tRNA ligase of Syntrophotalea carbinolica (strain DSM 2380 / NBRC 103641 / GraBd1) (Pelobacter carbinolicus).